Here is a 185-residue protein sequence, read N- to C-terminus: Ribosome-recycling factor (185 aa).

This sequence belongs to the RRF family.

It is found in the cytoplasm. Its function is as follows. Responsible for the release of ribosomes from messenger RNA at the termination of protein biosynthesis. May increase the efficiency of translation by recycling ribosomes from one round of translation to another. This chain is Ribosome-recycling factor, found in Shewanella amazonensis (strain ATCC BAA-1098 / SB2B).